The primary structure comprises 1542 residues: Pleiotropic ABC efflux transporter of multiple drugs PDH1 (1542 aa).

Residues 1–14 (MNTPDDSSVSSVDS) are compositionally biased toward low complexity. The disordered stretch occupies residues 1-61 (MNTPDDSSVS…APADGSAPLD (61 aa)). Topologically, residues 1–517 (MNTPDDSSVS…LIRNFWRIKN (517 aa)) are cytoplasmic. Basic and acidic residues predominate over residues 24 to 33 (NVEKRIRELA). Positions 35-47 (SLTQQSLTSSNRS) are enriched in polar residues. Positions 153-409 (VKLLNAVWRK…FQKMGYFCPK (257 aa)) constitute an ABC transporter 1 domain. Transmembrane regions (helical) follow at residues 518–540 (SASV…GSMF), 552–574 (FYFR…LLEI), 603–625 (VISE…YFLV), 634–652 (FFFY…SHLF), 662–684 (LQEA…GFAI), and 773–792 (GFGV…LILC). At 793-1220 (EFNEGAKQKG…LFQQYWRTPD (428 aa)) the chain is on the cytoplasmic side. A compositionally biased stretch (basic and acidic residues) spans 825 to 834 (TKMHTDKNDI). A disordered region spans residues 825-846 (TKMHTDKNDIENNSESITSNAT). Residues 835–846 (ENNSESITSNAT) are compositionally biased toward polar residues. An ABC transporter 2 domain is found at 885–1128 (FHWQNLCYDV…MIKYFEDHGA (244 aa)). Residue 921-928 (GASGAGKT) coordinates ATP. Helical transmembrane passes span 1221–1241 (YLWS…FTFF), 1256–1276 (SIFM…PTFV), 1296–1316 (AFIL…GTLA), 1342–1362 (LFWL…LFVI), 1370–1390 (TAAH…GVMA), and 1495–1515 (GIFI…YWLA). Residues 1516–1542 (RVPKTNGKIAKNGKTAKVNFIRRLIPF) lie on the Cytoplasmic side of the membrane.

It belongs to the ABC transporter superfamily. ABCG family. PDR (TC 3.A.1.205) subfamily. Phosphorylated by PKA. Dephosphorylated on glucose depletion and independently rephosphorylated during glucose exposure or under stress.

It localises to the cell membrane. Functionally, pleiotropic ABC efflux transporter that confers resistance to structurally and functionally unrelated compounds including caspofungin or azoles such as fluconazole, itraconazole, posaconazole, voriconazole, and isavuconazole. Does not play a role in the azole resistance in mature biofilms. In Candida glabrata (strain ATCC 2001 / BCRC 20586 / JCM 3761 / NBRC 0622 / NRRL Y-65 / CBS 138) (Yeast), this protein is Pleiotropic ABC efflux transporter of multiple drugs PDH1.